Reading from the N-terminus, the 314-residue chain is Methionyl-tRNA formyltransferase (314 aa).

110 to 113 (SLLP) is a binding site for (6S)-5,6,7,8-tetrahydrofolate.

It belongs to the Fmt family.

The catalysed reaction is L-methionyl-tRNA(fMet) + (6R)-10-formyltetrahydrofolate = N-formyl-L-methionyl-tRNA(fMet) + (6S)-5,6,7,8-tetrahydrofolate + H(+). Its function is as follows. Attaches a formyl group to the free amino group of methionyl-tRNA(fMet). The formyl group appears to play a dual role in the initiator identity of N-formylmethionyl-tRNA by promoting its recognition by IF2 and preventing the misappropriation of this tRNA by the elongation apparatus. This Bacillus cereus (strain G9842) protein is Methionyl-tRNA formyltransferase.